The sequence spans 119 residues: Large ribosomal subunit protein bL20 (119 aa).

This sequence belongs to the bacterial ribosomal protein bL20 family.

Functionally, binds directly to 23S ribosomal RNA and is necessary for the in vitro assembly process of the 50S ribosomal subunit. It is not involved in the protein synthesizing functions of that subunit. In Metamycoplasma arthritidis (strain 158L3-1) (Mycoplasma arthritidis), this protein is Large ribosomal subunit protein bL20.